The chain runs to 195 residues: uncharacterized protein (195 aa).

The next 4 membrane-spanning stretches (helical) occupy residues 89 to 106 (SWISVLLIVTIIALPLLP), 111 to 128 (HLPLAVYLMVLAGYVWKR), 149 to 168 (VKISRVGAVYLLFLAVVLLL), and 172 to 194 (LNALVVLLLIAVSCAAFFLFLNI).

The protein resides in the cell membrane. This is an uncharacterized protein from Bacillus subtilis (strain 168).